The sequence spans 973 residues: Microtubule-associated protein 1S (973 aa).

The necessary for the microtubule-organizing center localization stretch occupies residues 1-716; the sequence is MAAVMAAPEA…SESLPTLSDS (716 aa). 2 disordered regions span residues 452–538 and 560–853; these read HDLE…GPRA and LESE…SGRP. Residues 459–468 show a composition bias toward polar residues; the sequence is RANSQDSLAS. Position 462 is a phosphoserine (Ser-462). Residues 490–506 are compositionally biased toward basic and acidic residues; that stretch reads VRREPALATRDQKKDTR. Over residues 565–582 the composition is skewed to pro residues; it reads PPAPSPTLSPAQSPPPTA. Phosphoserine is present on residues Ser-586, Ser-591, and Ser-593. Residues 601-973 form a necessary for interaction with RASSF1 region; that stretch reads PDASPSATTP…EAFPACKVEF (373 aa). Over residues 603-621 the composition is skewed to low complexity; that stretch reads ASPSATTPTLTTPSLPAEL. Residues 645–880 are necessary for association with microtubules; that stretch reads DPGLSLPLRL…GGGAGHLDQN (236 aa). Phosphoserine is present on residues Ser-660 and Ser-684. Low complexity predominate over residues 703–722; sequence PTSVSESLPTLSDSDPVPVA. Position 724 is a phosphoserine (Ser-724). A compositionally biased stretch (pro residues) spans 736–749; the sequence is DPPPTPRVPPPLPD. A compositionally biased stretch (low complexity) spans 782–801; the sequence is ARPSSASATPRAATVAAKTK. A necessary for association with actin region spans residues 875 to 973; the sequence is GHLDQNFFLR…EAFPACKVEF (99 aa). The tract at residues 881 to 905 is necessary for the mitochondrial aggregation and genome destruction; sequence FFLRVRALCYVISGQGQRQEEGLRA.

It belongs to the MAP1 family. As to quaternary structure, heterodimer of a heavy and a light chain. Interacts with microtubules and actin. Both MAP1S heavy and light chains interact with microtubules. MAP1S light chain interacts with actin. Interacts with ESR1, LRPPRC, RASSF1, microtubules and VCY2. Interacts with WDR47 (via N-terminus of light chain). Interacts (via C-terminus) with GAN (via Kelch domains). In terms of tissue distribution, expressed in ventral and dorsal horns of the spinal cord, hippocampus, cerebral cortex, molecular, Purkinje and granular cell layers of the cerebellum and in dorsal root ganglia of the PNS (at protein level). Expressed in brain, testis, heart, lung, kidney and liver.

Its subcellular location is the nucleus. It localises to the cytoplasm. The protein localises to the cytosol. It is found in the cytoskeleton. The protein resides in the spindle. Microtubule-associated protein that mediates aggregation of mitochondria resulting in cell death and genomic destruction (MAGD). Plays a role in anchoring the microtubule organizing center to the centrosomes. Binds to DNA. Plays a role in apoptosis. Involved in the formation of microtubule bundles. This is Microtubule-associated protein 1S (Map1s) from Mus musculus (Mouse).